Consider the following 426-residue polypeptide: Histidine--tRNA ligase (426 aa).

It belongs to the class-II aminoacyl-tRNA synthetase family. As to quaternary structure, homodimer.

It is found in the cytoplasm. It carries out the reaction tRNA(His) + L-histidine + ATP = L-histidyl-tRNA(His) + AMP + diphosphate + H(+). This Streptococcus gordonii (strain Challis / ATCC 35105 / BCRC 15272 / CH1 / DL1 / V288) protein is Histidine--tRNA ligase.